Here is a 129-residue protein sequence, read N- to C-terminus: Small ribosomal subunit protein uS11 (129 aa).

It belongs to the universal ribosomal protein uS11 family. Part of the 30S ribosomal subunit. Interacts with proteins S7 and S18. Binds to IF-3.

In terms of biological role, located on the platform of the 30S subunit, it bridges several disparate RNA helices of the 16S rRNA. Forms part of the Shine-Dalgarno cleft in the 70S ribosome. The sequence is that of Small ribosomal subunit protein uS11 from Desulfovibrio desulfuricans (strain ATCC 27774 / DSM 6949 / MB).